Consider the following 464-residue polypeptide: UDP-N-acetylmuramoylalanine--D-glutamate ligase (464 aa).

127 to 133 (GSNGKST) provides a ligand contact to ATP.

This sequence belongs to the MurCDEF family.

It is found in the cytoplasm. It catalyses the reaction UDP-N-acetyl-alpha-D-muramoyl-L-alanine + D-glutamate + ATP = UDP-N-acetyl-alpha-D-muramoyl-L-alanyl-D-glutamate + ADP + phosphate + H(+). It functions in the pathway cell wall biogenesis; peptidoglycan biosynthesis. Its function is as follows. Cell wall formation. Catalyzes the addition of glutamate to the nucleotide precursor UDP-N-acetylmuramoyl-L-alanine (UMA). In Dinoroseobacter shibae (strain DSM 16493 / NCIMB 14021 / DFL 12), this protein is UDP-N-acetylmuramoylalanine--D-glutamate ligase.